A 169-amino-acid polypeptide reads, in one-letter code: uncharacterized protein (169 aa).

Disordered stretches follow at residues 32–53 (VSGPDWNPNTSQPMPGSPAPAP) and 148–169 (VSGSRGREGRLRPQCAGSAGGA).

This is an uncharacterized protein from Homo sapiens (Human).